We begin with the raw amino-acid sequence, 303 residues long: B1 kinase (303 aa).

The protein belongs to the protein kinase superfamily. Ser/Thr protein kinase family. Poxviruses subfamily. As to quaternary structure, interacts with host JIP1; this interaction increases the amount of MAPK bound to JIP1 and subsequently increases the activity of transcription factors, such as JUN, that respond to these complexes. Interacts with protein OPG198; this interaction inhibits the repressive activity of OPG198 pseudokinase on viral replication factory formation. Requires Mg(2+) as cofactor. In terms of processing, autophosphorylated.

It is found in the virion. It localises to the host cytoplasm. It catalyses the reaction L-seryl-[protein] + ATP = O-phospho-L-seryl-[protein] + ADP + H(+). The catalysed reaction is L-threonyl-[protein] + ATP = O-phospho-L-threonyl-[protein] + ADP + H(+). In terms of biological role, essential serine/threonine-protein kinase that plays different role in the viral life cycle. Phosphorylates the host small ribosomal protein RACK1 thereby customizing the ribosomes to a state optimal for viral mRNAs (which contain poly-A leaders) but not for host mRNAs. Facilitates viral DNA replication by inhibiting host BANF1, a cellular host defense responsive to foreign DNA. Phosphorylates host BANF1 on serine and threonine residues; this leads to BANF1 relocalization to the cytoplasm, loss of dimerization and impaired DNA binding activity. Indeed, BANF1 activity depends on its DNA-binding property which is blocked by VPK1-mediated phosphorylation. Required for viral intermediate genes expression, probably by inhibiting host BANF1. Modulates cellular responses via host JUN by two different mechanisms, either by direct phosphorylation or by modulation of upstream JIP1-MAPK complexes. Seems to participate in the accumulation/processing of late proteins and thus in virion maturation. In addition, inhibits B12 repressive activity on viral DNA replication via a phosphorylation-dependent mechanism. The polypeptide is B1 kinase (OPG187) (Cynomys gunnisoni (Gunnison's prairie dog)).